Reading from the N-terminus, the 267-residue chain is Neural/ectodermal development factor IMP-L2 (267 aa).

Positions methionine 1–glycine 25 are cleaved as a signal peptide. 2 Ig-like C2-type domains span residues proline 48–tyrosine 149 and proline 174–tyrosine 260. 2 cysteine pairs are disulfide-bonded: cysteine 80/cysteine 139 and cysteine 195/cysteine 244.

Detected in several sites including the ventral neuroectoderm, the tracheal pits, the pharynx and esophagus, and specific neuronal cell bodies, where it is primarily expressed.

The protein localises to the secreted. Its subcellular location is the extracellular space. Its function is as follows. Essential developmental role during embryogenesis, in particular the normal development of the nervous system. May be involved in some aspect of cell adhesion. The sequence is that of Neural/ectodermal development factor IMP-L2 (ImpL2) from Drosophila melanogaster (Fruit fly).